The chain runs to 218 residues: Ribose-5-phosphate isomerase A (218 aa).

Substrate-binding positions include 28-31 (SGST), 81-84 (DGAD), and 94-97 (KGKG). The active-site Proton acceptor is Glu-103. Substrate is bound at residue Lys-121.

It belongs to the ribose 5-phosphate isomerase family. As to quaternary structure, homodimer.

The catalysed reaction is aldehydo-D-ribose 5-phosphate = D-ribulose 5-phosphate. Its pathway is carbohydrate degradation; pentose phosphate pathway; D-ribose 5-phosphate from D-ribulose 5-phosphate (non-oxidative stage): step 1/1. In terms of biological role, catalyzes the reversible conversion of ribose-5-phosphate to ribulose 5-phosphate. This is Ribose-5-phosphate isomerase A from Wigglesworthia glossinidia brevipalpis.